Here is a 606-residue protein sequence, read N- to C-terminus: CDPK-related kinase 8 (606 aa).

The span at 1–14 (MGGCTSKPSTSSGR) shows a compositional bias: polar residues. The segment at 1–132 (MGGCTSKPST…TEVPQREEEE (132 aa)) is disordered. Gly2 carries the N-myristoyl glycine lipid modification. Over residues 98-110 (KHIRAALRRRKGK) the composition is skewed to basic residues. The 263-residue stretch at 150–412 (VELGEEIGRG…ASQALMHPWI (263 aa)) folds into the Protein kinase domain. ATP-binding positions include 156-164 (IGRGHFGYT) and Lys182. Asp278 serves as the catalytic Proton acceptor. Position 318 is a phosphoserine (Ser318). Positions 418–448 (DMNIPFDILIFRQMKAYLRSSSLRKAALRAL) are autoinhibitory domain. Residues 437–457 (SSSLRKAALRALSKTLIKDEI) are calmodulin binding (CaMBD). EF-hand domains lie at 455 to 491 (DEIL…ATEA), 492 to 527 (MKES…VHQH), 528 to 567 (ESLD…GPSI), and 570 to 599 (HSVL…VSVR). Asn470, Asp472, Glu516, Asp545, Asn547, Asn549, Glu556, Asp581, and Lys583 together coordinate Ca(2+). Ser585 is modified (phosphoserine).

It belongs to the protein kinase superfamily. Ser/Thr protein kinase family. CDPK subfamily. In terms of assembly, binds calmodulin (CaM) in a calcium-dependent manner. Post-translationally, autophosphorylated.

The protein localises to the membrane. It carries out the reaction L-seryl-[protein] + ATP = O-phospho-L-seryl-[protein] + ADP + H(+). The enzyme catalyses L-threonyl-[protein] + ATP = O-phospho-L-threonyl-[protein] + ADP + H(+). Its activity is regulated as follows. Activated by calcium and calmodulin. Autophosphorylation may play an important role in the regulation of the kinase activity. In terms of biological role, may play a role in signal transduction pathways that involve calcium as a second messenger. This Arabidopsis thaliana (Mouse-ear cress) protein is CDPK-related kinase 8 (CRK8).